A 737-amino-acid polypeptide reads, in one-letter code: Ribosome-releasing factor 2, mitochondrial (737 aa).

The transit peptide at Met-1–Tyr-29 directs the protein to the mitochondrion. A tr-type G domain is found at Ser-31–Glu-310. Residues Ala-40–Thr-47, Asp-104–His-108, and Asn-158–Asp-161 each bind GTP.

This sequence belongs to the TRAFAC class translation factor GTPase superfamily. Classic translation factor GTPase family. EF-G/EF-2 subfamily.

The protein resides in the mitochondrion. Functionally, mitochondrial GTPase that mediates the disassembly of ribosomes from messenger RNA at the termination of mitochondrial protein biosynthesis. Not involved in the GTP-dependent ribosomal translocation step during translation elongation. In Drosophila persimilis (Fruit fly), this protein is Ribosome-releasing factor 2, mitochondrial.